The chain runs to 1158 residues: Type IV pilus biogenesis factor PilY1 (1158 aa).

Positions 1-29 are cleaved as a signal peptide; sequence MIHQITRAGKSLLAAGCTLSILFASDSYA. Positions 841, 843, 845, 847, and 849 each coordinate Ca(2+).

The protein belongs to the PilY1 family.

Its subcellular location is the fimbrium. The protein resides in the membrane. It is found in the cytoplasm. It localises to the cytosol. Functionally, involved in pilus assembly, twitching motility and adhesion to host cells. Primes type IV pili (T4P) assembly and is required for inclusion of minor pilins PilV, PilW and PilX to the surface pili. Stabilizes assembled pilus fibers likely by antagonizing retraction mediated by PilT. Calcium-binding and calcium release by PilY1 seem to be essential for twitching motility and for regulation of pilus retraction dynamics of PilT. Regulates surface-activated virulence possibly by acting as a surface-attachment mechanosensor. The sequence is that of Type IV pilus biogenesis factor PilY1 from Pseudomonas aeruginosa (strain UCBPP-PA14).